The following is a 389-amino-acid chain: UDP-GlcNAc:betaGal beta-1,3-N-acetylglucosaminyltransferase 8 (389 aa).

Residues 1 to 7 are Cytoplasmic-facing; it reads MRCRKCQ. A helical; Signal-anchor for type II membrane protein transmembrane segment spans residues 8–24; sequence LCLSALLTLLGLKVYIE. At 25 to 389 the chain is on the lumenal side; sequence WTSESWLKKA…RHLWVPELQC (365 aa). The segment at 36–57 is disordered; it reads PRGALPSPTPPNAEPTLPTNLS. 2 N-linked (GlcNAc...) asparagine glycosylation sites follow: Asn-55 and Asn-212.

Belongs to the glycosyltransferase 31 family. Interacts with B3GNT2; this interaction greatly increases B3GNT2 catalytic activity, independently of B3GNT8 enzymatic activity.

It is found in the golgi apparatus membrane. It functions in the pathway protein modification; protein glycosylation. In terms of biological role, beta-1,3-N-acetylglucosaminyltransferase that plays a role in the elongation of specific branch structures of multiantennary N-glycans. Has strong activity towards tetraantennary N-glycans and 2,6 triantennary glycans. The sequence is that of UDP-GlcNAc:betaGal beta-1,3-N-acetylglucosaminyltransferase 8 from Mus musculus (Mouse).